A 278-amino-acid polypeptide reads, in one-letter code: 4-deoxy-L-threo-5-hexosulose-uronate ketol-isomerase (278 aa).

Zn(2+)-binding residues include His-196, His-198, Glu-203, and His-245.

It belongs to the KduI family. It depends on Zn(2+) as a cofactor.

The enzyme catalyses 5-dehydro-4-deoxy-D-glucuronate = 3-deoxy-D-glycero-2,5-hexodiulosonate. It functions in the pathway glycan metabolism; pectin degradation; 2-dehydro-3-deoxy-D-gluconate from pectin: step 4/5. In terms of biological role, catalyzes the isomerization of 5-dehydro-4-deoxy-D-glucuronate to 3-deoxy-D-glycero-2,5-hexodiulosonate. The polypeptide is 4-deoxy-L-threo-5-hexosulose-uronate ketol-isomerase (Pectobacterium carotovorum subsp. carotovorum (Erwinia carotovora subsp. carotovora)).